A 500-amino-acid polypeptide reads, in one-letter code: Cytochrome P450 2D3 (500 aa).

Heme is bound at residue cysteine 446.

This sequence belongs to the cytochrome P450 family. It depends on heme as a cofactor.

It is found in the endoplasmic reticulum membrane. The protein localises to the microsome membrane. It carries out the reaction an organic molecule + reduced [NADPH--hemoprotein reductase] + O2 = an alcohol + oxidized [NADPH--hemoprotein reductase] + H2O + H(+). Cytochromes P450 are a group of heme-thiolate monooxygenases. In liver microsomes, this enzyme is involved in an NADPH-dependent electron transport pathway. It oxidizes a variety of structurally unrelated compounds, including steroids, fatty acids, and xenobiotics. This chain is Cytochrome P450 2D3 (Cyp2d3), found in Rattus norvegicus (Rat).